The primary structure comprises 176 residues: Immunity factor for TNT homolog (176 aa).

Interacts with the tuberculosis necrotizing toxin (TNT) homolog, the C-terminal domain of the outer membrane channel protein CpnT.

Its function is as follows. Antitoxin for tuberculosis necrotizing toxin (TNT) homolog. Acts by binding directly to TNT, which inhibits NAD(+) glycohydrolase activity of TNT and protects M.bovis from self-poisoning. The sequence is that of Immunity factor for TNT homolog from Mycobacterium bovis (strain BCG / Pasteur 1173P2).